The primary structure comprises 242 residues: Segregation and condensation protein A (242 aa).

It belongs to the ScpA family. In terms of assembly, component of a cohesin-like complex composed of ScpA, ScpB and the Smc homodimer, in which ScpA and ScpB bind to the head domain of Smc. The presence of the three proteins is required for the association of the complex with DNA.

It localises to the cytoplasm. Functionally, participates in chromosomal partition during cell division. May act via the formation of a condensin-like complex containing Smc and ScpB that pull DNA away from mid-cell into both cell halves. The chain is Segregation and condensation protein A from Streptococcus pneumoniae (strain Taiwan19F-14).